We begin with the raw amino-acid sequence, 159 residues long: MAMASATATLSFKTPSLSLSPPSTRCSAAQGISLTHFNKQLKSTLNLSSSSSISSSKVQPIVLKNKRISTVDSSVSTSSPSFTVFAAKGYKMKTHKASAKRFRVTGKGKIVRRRAGKQHLLAKKNTKRKNRLSKLIQVDRSDYDNVIGALPYLKVNRKV.

The transit peptide at 1 to 86 (MAMASATATL…TSSPSFTVFA (86 aa)) directs the protein to the chloroplast.

Component of the chloroplast large ribosomal subunit (LSU). Mature 70S chloroplast ribosomes of higher plants consist of a small (30S) and a large (50S) subunit. The 30S small subunit contains 1 molecule of ribosomal RNA (16S rRNA) and 24 different proteins. The 50S large subunit contains 3 rRNA molecules (23S, 5S and 4.5S rRNA) and 33 different proteins.

It localises to the plastid. The protein localises to the chloroplast. In terms of biological role, component of the chloroplast ribosome (chloro-ribosome), a dedicated translation machinery responsible for the synthesis of chloroplast genome-encoded proteins, including proteins of the transcription and translation machinery and components of the photosynthetic apparatus. This Spinacia oleracea (Spinach) protein is Large ribosomal subunit protein bL35c (RPL35).